Here is a 637-residue protein sequence, read N- to C-terminus: 1-deoxy-D-xylulose-5-phosphate synthase (637 aa).

Residues His-71 and 112–114 (SHA) contribute to the thiamine diphosphate site. Asp-144 lines the Mg(2+) pocket. Thiamine diphosphate is bound by residues 145-146 (GA), Asn-173, Tyr-284, and Glu-365. Position 173 (Asn-173) interacts with Mg(2+).

Belongs to the transketolase family. DXPS subfamily. In terms of assembly, homodimer. Mg(2+) serves as cofactor. The cofactor is thiamine diphosphate.

It carries out the reaction D-glyceraldehyde 3-phosphate + pyruvate + H(+) = 1-deoxy-D-xylulose 5-phosphate + CO2. It functions in the pathway metabolic intermediate biosynthesis; 1-deoxy-D-xylulose 5-phosphate biosynthesis; 1-deoxy-D-xylulose 5-phosphate from D-glyceraldehyde 3-phosphate and pyruvate: step 1/1. In terms of biological role, catalyzes the acyloin condensation reaction between C atoms 2 and 3 of pyruvate and glyceraldehyde 3-phosphate to yield 1-deoxy-D-xylulose-5-phosphate (DXP). This is 1-deoxy-D-xylulose-5-phosphate synthase from Mycolicibacterium gilvum (strain PYR-GCK) (Mycobacterium gilvum (strain PYR-GCK)).